The chain runs to 186 residues: DNA-directed RNA polymerase 22 kDa subunit (186 aa).

It belongs to the poxviridae DNA-directed RNA polymerase 22 kDa subunit family. The DNA-dependent RNA polymerase used for intermediate and late genes expression consists of eight subunits Rpo30/OPG66, Rpo7/OPG90, Rpo22/OPG103, Rpo147/OPG105, Rpo18/OPG119, Rpo19/OPG131, Rpo132/OPG151 and Rpo35/OPG156. The same holoenzyme, with the addition of the transcription-specificity factor OPG109, is used for early gene expression.

It is found in the virion. It carries out the reaction RNA(n) + a ribonucleoside 5'-triphosphate = RNA(n+1) + diphosphate. In terms of biological role, part of the DNA-dependent RNA polymerase which catalyzes the transcription of viral DNA into RNA using the four ribonucleoside triphosphates as substrates. Responsible for the transcription of early, intermediate and late genes. DNA-dependent RNA polymerase associates with the early transcription factor (ETF), itself composed of OPG118 and OPG133, thereby allowing the early genes transcription. Late transcription, and probably also intermediate transcription, require newly synthesized RNA polymerase. This chain is DNA-directed RNA polymerase 22 kDa subunit (OPG103), found in Vertebrata (FPV).